A 278-amino-acid polypeptide reads, in one-letter code: Indole-3-glycerol phosphate synthase (278 aa).

Belongs to the TrpC family.

The catalysed reaction is 1-(2-carboxyphenylamino)-1-deoxy-D-ribulose 5-phosphate + H(+) = (1S,2R)-1-C-(indol-3-yl)glycerol 3-phosphate + CO2 + H2O. It participates in amino-acid biosynthesis; L-tryptophan biosynthesis; L-tryptophan from chorismate: step 4/5. The protein is Indole-3-glycerol phosphate synthase of Pseudomonas paraeruginosa (strain DSM 24068 / PA7) (Pseudomonas aeruginosa (strain PA7)).